A 620-amino-acid polypeptide reads, in one-letter code: UvrABC system protein C (620 aa).

A GIY-YIG domain is found at 13-92 (DKPGVYIMKN…IKKYSPRYNI (80 aa)). Residues 204 to 239 (TSIIKNLKLEMEKAAEELEFEKAAKIRDRILAIELI) form the UVR domain.

It belongs to the UvrC family. As to quaternary structure, interacts with UvrB in an incision complex.

The protein localises to the cytoplasm. Functionally, the UvrABC repair system catalyzes the recognition and processing of DNA lesions. UvrC both incises the 5' and 3' sides of the lesion. The N-terminal half is responsible for the 3' incision and the C-terminal half is responsible for the 5' incision. The polypeptide is UvrABC system protein C (Clostridium perfringens (strain SM101 / Type A)).